Consider the following 267-residue polypeptide: 4-hydroxy-tetrahydrodipicolinate reductase (267 aa).

Residues 8–13 (GAGGRM) and glutamate 34 each bind NAD(+). An NADP(+)-binding site is contributed by arginine 35. NAD(+)-binding positions include 98 to 100 (GTT) and 122 to 125 (APNM). Catalysis depends on histidine 155, which acts as the Proton donor/acceptor. Histidine 156 lines the (S)-2,3,4,5-tetrahydrodipicolinate pocket. Lysine 159 functions as the Proton donor in the catalytic mechanism. 165–166 (GT) is a (S)-2,3,4,5-tetrahydrodipicolinate binding site.

This sequence belongs to the DapB family.

It localises to the cytoplasm. It carries out the reaction (S)-2,3,4,5-tetrahydrodipicolinate + NAD(+) + H2O = (2S,4S)-4-hydroxy-2,3,4,5-tetrahydrodipicolinate + NADH + H(+). The enzyme catalyses (S)-2,3,4,5-tetrahydrodipicolinate + NADP(+) + H2O = (2S,4S)-4-hydroxy-2,3,4,5-tetrahydrodipicolinate + NADPH + H(+). It participates in amino-acid biosynthesis; L-lysine biosynthesis via DAP pathway; (S)-tetrahydrodipicolinate from L-aspartate: step 4/4. Functionally, catalyzes the conversion of 4-hydroxy-tetrahydrodipicolinate (HTPA) to tetrahydrodipicolinate. In Thioalkalivibrio sulfidiphilus (strain HL-EbGR7), this protein is 4-hydroxy-tetrahydrodipicolinate reductase.